We begin with the raw amino-acid sequence, 1152 residues long: Autotransporter adhesin BpaC (1152 aa).

The signal sequence occupies residues 1-71; it reads MNRIFKSIWC…PFAEEAMAAN (71 aa). Positions 72 to 1061 are surface exposed passenger domain; sequence NAGVCLTYNG…VGQLNSAVSG (990 aa). Disordered stretches follow at residues 420-886 and 900-949; these read GLQG…AGAT and TATG…ESAA. Polar residues predominate over residues 427–442; sequence ANTGTASGDNSTASGD. Positions 443 to 504 are enriched in low complexity; sequence NATASGTNST…ANGTNSTASG (62 aa). A compositionally biased stretch (polar residues) spans 505–519; sequence DNSTASGTNASATGE. Low complexity predominate over residues 520–588; sequence NSTATGTDST…ANGTNSTASG (69 aa). The span at 589–603 shows a compositional bias: polar residues; sequence DNSTASGTNASATGE. Over residues 604–630 the composition is skewed to low complexity; the sequence is NSTATGTDSTASGSNSTANGTNSTASG. Residues 631-645 are compositionally biased toward polar residues; it reads DNSTASGTNASATGE. A compositionally biased stretch (low complexity) spans 646-672; it reads NSTATGTDSTASGSNSTANGTNSTASG. Residues 673–687 are compositionally biased toward polar residues; the sequence is DNSTASGTNASATGE. Positions 688 to 714 are enriched in low complexity; sequence NSTATGTDSTASGSNSTANGTNSTASG. Polar residues predominate over residues 715-729; it reads DNSTASGTNASATGE. The span at 730 to 756 shows a compositional bias: low complexity; that stretch reads NSTATGTDSTASGSNSTANGANSTASG. The segment covering 757–771 has biased composition (polar residues); that stretch reads DNSTASGTNASATGE. Composition is skewed to low complexity over residues 772-840 and 848-886; these read NSTA…TASG and TNASATGENSTATGTASTASGSNSTANGANSTASGAGAT. The outer membrane translocation of the passenger domain stretch occupies residues 1062–1099; the sequence is IRNQMDGMQGQIDTLARDAYSGIAAATALTMIPDVDPG. The segment at 1100–1152 is translocator domain; it reads KTLAVGIGTANFKGYQASALGATARITQNLKVKTGVSYSGSNYVWGAGMSYQW.

It belongs to the autotransporter-2 (AT-2) (TC 1.B.40) family. Homotrimer.

It is found in the cell surface. It localises to the cell outer membrane. Involved in virulence. Mediates adherence to human respiratory epithelial cells. This chain is Autotransporter adhesin BpaC, found in Burkholderia pseudomallei (strain 1026b).